We begin with the raw amino-acid sequence, 201 residues long: NADH-quinone oxidoreductase subunit I (201 aa).

4Fe-4S ferredoxin-type domains lie at 78-107 (MSYE…RIEA) and 116-147 (KVVR…MTDI). 8 residues coordinate [4Fe-4S] cluster: cysteine 87, cysteine 90, cysteine 93, cysteine 97, cysteine 127, cysteine 130, cysteine 133, and cysteine 137.

This sequence belongs to the complex I 23 kDa subunit family. As to quaternary structure, NDH-1 is composed of 14 different subunits. Subunits NuoA, H, J, K, L, M, N constitute the membrane sector of the complex. The cofactor is [4Fe-4S] cluster.

The protein localises to the cell inner membrane. It carries out the reaction a quinone + NADH + 5 H(+)(in) = a quinol + NAD(+) + 4 H(+)(out). Functionally, NDH-1 shuttles electrons from NADH, via FMN and iron-sulfur (Fe-S) centers, to quinones in the respiratory chain. The immediate electron acceptor for the enzyme in this species is believed to be ubiquinone. Couples the redox reaction to proton translocation (for every two electrons transferred, four hydrogen ions are translocated across the cytoplasmic membrane), and thus conserves the redox energy in a proton gradient. The protein is NADH-quinone oxidoreductase subunit I of Aquifex aeolicus (strain VF5).